The sequence spans 76 residues: Senegalin (76 aa).

The signal sequence occupies residues 1 to 22 (MLSLKKSMLLLFFLGMVSFSLA). Positions 23–55 (NKRSDGKRADEEGEDKRADEEGEDKRADEEGED) are excised as a propeptide. The segment at 24–54 (KRSDGKRADEEGEDKRADEEGEDKRADEEGE) is disordered. Residue L75 is modified to Leucine amide.

As to expression, expressed by the skin glands.

Its subcellular location is the secreted. Functionally, antimicrobial peptide with activity against the Gram-positive bacterium S.aureus NCTC 10788 (MIC=50 um) and the yeast C.albicans NCPF 1467 (MIC=150 uM). Ineffective against the Gram-negative bacterium E.coli NCTC 10418. Induces a dose-dependent contraction of rat urinary bladder smooth muscle (EC50=2.9 nM) and a dose-dependent relaxation of rat tail artery smooth muscle (EC50=37.7 nM). This is Senegalin from Kassina senegalensis (Senegal running frog).